Reading from the N-terminus, the 484-residue chain is Adenylosuccinate lyase (484 aa).

Residue Ala-2 is modified to N-acetylalanine. Residues 20 to 21, 85 to 87, and 111 to 112 each bind substrate; these read RY, RHD, and TS. At Lys-147 the chain carries N6-acetyllysine. The active-site Proton donor/acceptor is the His-159. Position 241 (Gln-241) interacts with substrate. Catalysis depends on Ser-289, which acts as the Proton donor/acceptor. Lys-295 carries the post-translational modification N6-acetyllysine. Substrate is bound by residues Arg-303, Arg-329, Ser-334, and Arg-338. Residue Lys-415 forms a Glycyl lysine isopeptide (Lys-Gly) (interchain with G-Cter in SUMO1) linkage.

It belongs to the lyase 1 family. Adenylosuccinate lyase subfamily. In terms of assembly, homotetramer. Residues from neighboring subunits contribute catalytic and substrate-binding residues to each active site.

The enzyme catalyses N(6)-(1,2-dicarboxyethyl)-AMP = fumarate + AMP. It carries out the reaction (2S)-2-[5-amino-1-(5-phospho-beta-D-ribosyl)imidazole-4-carboxamido]succinate = 5-amino-1-(5-phospho-beta-D-ribosyl)imidazole-4-carboxamide + fumarate. It participates in purine metabolism; AMP biosynthesis via de novo pathway; AMP from IMP: step 2/2. The protein operates within purine metabolism; IMP biosynthesis via de novo pathway; 5-amino-1-(5-phospho-D-ribosyl)imidazole-4-carboxamide from 5-amino-1-(5-phospho-D-ribosyl)imidazole-4-carboxylate: step 2/2. Catalyzes two non-sequential steps in de novo AMP synthesis: converts (S)-2-(5-amino-1-(5-phospho-D-ribosyl)imidazole-4-carboxamido)succinate (SAICAR) to fumarate plus 5-amino-1-(5-phospho-D-ribosyl)imidazole-4-carboxamide, and thereby also contributes to de novo IMP synthesis, and converts succinyladenosine monophosphate (SAMP) to AMP and fumarate. The polypeptide is Adenylosuccinate lyase (ADSL) (Macaca fascicularis (Crab-eating macaque)).